A 725-amino-acid chain; its full sequence is Kelch domain-containing protein SSO1033 (725 aa).

A signal peptide spans 1-28; it reads MKYGNMKKWAPLILFLFSLLLLQGISLH. Kelch repeat units lie at residues 59–100, 101–145, 146–199, 201–248, 250–297, and 299–342; these read SLYI…VYNN, TIYV…VYNN, AIYV…FNGT, LIIV…YYRG, LFIV…QVGN, and LYLA…VTLG. Fibronectin type-III domains are found at residues 323–410, 411–504, 505–583, and 585–665; these read PPLP…TPAS, VPNP…TKAS, VFAF…VVYY, and PPAS…TGDY.

The chain is Kelch domain-containing protein SSO1033 from Saccharolobus solfataricus (strain ATCC 35092 / DSM 1617 / JCM 11322 / P2) (Sulfolobus solfataricus).